Consider the following 105-residue polypeptide: Small ribosomal subunit protein bS18 (105 aa).

Positions 1-34 are disordered; sequence MMINKEQDLNQLETNQEQSVEQNQTDEKRKPKPN. Over residues 9-23 the composition is skewed to polar residues; sequence LNQLETNQEQSVEQN.

It belongs to the bacterial ribosomal protein bS18 family. As to quaternary structure, part of the 30S ribosomal subunit. Forms a tight heterodimer with protein bS6.

Functionally, binds as a heterodimer with protein bS6 to the central domain of the 16S rRNA, where it helps stabilize the platform of the 30S subunit. The chain is Small ribosomal subunit protein bS18 from Mycoplasma genitalium (strain ATCC 33530 / DSM 19775 / NCTC 10195 / G37) (Mycoplasmoides genitalium).